We begin with the raw amino-acid sequence, 542 residues long: Chaperonin GroEL (542 aa).

ATP contacts are provided by residues 29 to 32 (TLGP), 86 to 90 (DGTTT), G413, 477 to 479 (NAA), and D493.

This sequence belongs to the chaperonin (HSP60) family. In terms of assembly, forms a cylinder of 14 subunits composed of two heptameric rings stacked back-to-back. Interacts with the co-chaperonin GroES.

The protein resides in the cytoplasm. It carries out the reaction ATP + H2O + a folded polypeptide = ADP + phosphate + an unfolded polypeptide.. In terms of biological role, together with its co-chaperonin GroES, plays an essential role in assisting protein folding. The GroEL-GroES system forms a nano-cage that allows encapsulation of the non-native substrate proteins and provides a physical environment optimized to promote and accelerate protein folding. The protein is Chaperonin GroEL of Beutenbergia cavernae (strain ATCC BAA-8 / DSM 12333 / CCUG 43141 / JCM 11478 / NBRC 16432 / NCIMB 13614 / HKI 0122).